The chain runs to 550 residues: Hydroxylamine reductase (550 aa).

4 residues coordinate [2Fe-2S] cluster: Cys3, Cys6, Cys18, and Cys25. Residues His249, Glu273, Cys317, Cys405, Cys433, Cys458, Glu492, and Lys494 each coordinate hybrid [4Fe-2O-2S] cluster. Cys405 is subject to Cysteine persulfide.

Belongs to the HCP family. [2Fe-2S] cluster is required as a cofactor. Hybrid [4Fe-2O-2S] cluster serves as cofactor.

It is found in the cytoplasm. It carries out the reaction A + NH4(+) + H2O = hydroxylamine + AH2 + H(+). Catalyzes the reduction of hydroxylamine to form NH(3) and H(2)O. The polypeptide is Hydroxylamine reductase (Escherichia coli O6:H1 (strain CFT073 / ATCC 700928 / UPEC)).